Here is a 443-residue protein sequence, read N- to C-terminus: tRNA-2-methylthio-N(6)-dimethylallyladenosine synthase (443 aa).

One can recognise an MTTase N-terminal domain in the interval 1-114 (MRFYIKTFGC…VTEAVKRALQ (114 aa)). [4Fe-4S] cluster-binding residues include C10, C46, C79, C150, C154, and C157. The 232-residue stretch at 136 to 367 (RSSKHHAWVT…MNLQKRINRK (232 aa)) folds into the Radical SAM core domain. The TRAM domain occupies 370-431 (ERYKGKTVRV…AGPLYGKVVW (62 aa)).

It belongs to the methylthiotransferase family. MiaB subfamily. In terms of assembly, monomer. Requires [4Fe-4S] cluster as cofactor.

It is found in the cytoplasm. It carries out the reaction N(6)-dimethylallyladenosine(37) in tRNA + (sulfur carrier)-SH + AH2 + 2 S-adenosyl-L-methionine = 2-methylsulfanyl-N(6)-dimethylallyladenosine(37) in tRNA + (sulfur carrier)-H + 5'-deoxyadenosine + L-methionine + A + S-adenosyl-L-homocysteine + 2 H(+). Functionally, catalyzes the methylthiolation of N6-(dimethylallyl)adenosine (i(6)A), leading to the formation of 2-methylthio-N6-(dimethylallyl)adenosine (ms(2)i(6)A) at position 37 in tRNAs that read codons beginning with uridine. This is tRNA-2-methylthio-N(6)-dimethylallyladenosine synthase from Thermotoga sp. (strain RQ2).